Reading from the N-terminus, the 440-residue chain is Tripartite motif-containing protein 14 (440 aa).

The B box-type zinc finger occupies 17 to 59 (AYGWRCPEHSERPAELFCRRCGRCVCALCPVLGAHRGHPVGLA). Positions 22, 25, 45, and 51 each coordinate Zn(2+). The 194-residue stretch at 247–440 (ALLKTSPSPE…EGPISIPRLP (194 aa)) folds into the B30.2/SPRY domain.

This sequence belongs to the TRIM/RBCC family. Interacts with MAVS. Interacts with WRNIP1 and PPP6C; these interactions positively regulate the RIG-I signaling pathway. Interacts with CGAS; this interaction stabilizes CGAS and promotes type I interferon production. Interacts with USP14; this interaction mediates the cleavage of 'Lys-48'-linked ubiquitination of CGAS. Interacts with TBK1. Interacts with SPI1. Interacts with KDM4D and USP14. Ubiquitinated. Undergoes 'Lys-63'-linked polyubiquitination; this modification allows IKBKG/NEMO recruitment to MAVS. Undergoes 'Lys-48'-linked polyubiquitination by RNF125; this modification mediates its degradation via the ubiquitin-proteasome pathway. In terms of tissue distribution, expressed with high level in spleen, thymus, liver and testis. Expressed with low level in the brain, kidney, and skeletal muscle. Expressed in various differentiation stages of B-lymphocytes.

It localises to the mitochondrion outer membrane. Its subcellular location is the cytoplasmic vesicle. The protein localises to the phagosome. Its function is as follows. Plays a role in the innate immune defense against viruses. Facilitates the type I IFN response by interacting with MAVS at the outer mitochondria membrane and thereby recruiting NF-kappa-B essential modulator IKBKG/NEMO to the MAVS signalosome, leading to the activation of both the IFN regulatory factor 3/IRF3 and NF-kappa-B pathways. Positively regulates the CGAS-induced type I interferon signaling pathway by stabilizing CGAS and inhibiting its autophagic degradation. Inhibits the transcriptional activity of SPI1 in a dose-dependent manner. Also inhibits OPTN-mediated selective autophagic degradation of KDM4D and thereby negatively regulates H3K9me2 and H3K9me3. Mechanistically, recruits USP14 to remove the 'Lys-63'-linked ubiquitination of KDM4D, preventing its recognition by OPTN and subsequent degradation. Plays an essential role in the innate immune defense against viruses and bacteria. Facilitates the type I IFN response by interacting with MAVS at the outer mitochondria membrane and thereby recruiting NF-kappa-B essential modulator IKBKG/NEMO to the MAVS signalosome, leading to the activation of both the IFN regulatory factor 3/IRF3 and NF-kappa-B pathways. Positively regulates the CGAS-induced type I interferon signaling pathway by stabilizing CGAS and inhibiting its autophagic degradation. Acts as a scaffold between TBK1 and STAT3 to promote phosphorylation of STAT3 and resolve interferon-stimulated gene (ISG) expression. Inhibits the transcriptional activity of SPI1 in a dose-dependent manner. In Mus musculus (Mouse), this protein is Tripartite motif-containing protein 14 (Trim14).